We begin with the raw amino-acid sequence, 46 residues long: Cystatin WCPI-3 (46 aa).

A Secondary area of contact motif is present at residues 35-38 (VVAG).

The protein belongs to the cystatin family. Phytocystatin subfamily.

Functionally, inhibitor of papain. This is Cystatin WCPI-3 from Wisteria floribunda (Japanese wisteria).